The following is a 239-amino-acid chain: MPDNLYATNMSLDLSITGHSTALPQRKSRSTYRFKAANSYVDESLFGSSGVRVDQTLQWNTAPPSQTPLLWSPGEIKENKKTSSCRPKSTPAGTPRKKIQYRVKSRTPSYCDESLFGGKVEECTWDAPWVKKEDTVKIRPLLWSPSPRLVQQSSMQNAKQGPLRAVHPPETSDSPLGTHKGLGAFWKPPESDSDYSPSPFSARQRQSTPGRETVRSASCSGRVTARRGSVKMQERPPWK.

A Nuclear export signal motif is present at residues Leu-12–Pro-24. 2 disordered regions span residues Ala-62–Lys-97 and Leu-149–Lys-239. The Nuclear localization signal signature appears at Gly-93–Ser-109. An interaction with RBPJ/RBPSUH region spans residues Trp-129–Ala-158. 2 stretches are compositionally biased toward polar residues: residues Leu-149–Lys-159 and Arg-203–Gly-221. Residues Ala-158 to Lys-239 form an interaction with tubulin region.

Belongs to the RITA family. In terms of assembly, interacts with rbpj/rbpsuh.

It localises to the cytoplasm. The protein resides in the nucleus. Functionally, tubulin-binding protein that acts as a negative regulator of Notch signaling pathway. Shuttles between the cytoplasm and the nucleus and mediates the nuclear export of rbpj/rbpsuh, thereby preventing the interaction between rbpj/rbpsuh and NICD product of Notch proteins (Notch intracellular domain), leading to down-regulate Notch-mediated transcription. May play a role in neurogenesis. The chain is RBPJ-interacting and tubulin-associated protein 1 (rita1) from Xenopus laevis (African clawed frog).